A 364-amino-acid polypeptide reads, in one-letter code: Fructose-bisphosphate aldolase B (364 aa).

At alanine 2 the chain carries N-acetylalanine. Lysine 13 carries the post-translational modification N6-succinyllysine. Phosphoserine is present on serine 36. Phosphothreonine is present on threonine 39. Beta-D-fructose 1,6-bisphosphate is bound at residue arginine 43. At threonine 119 the chain carries Phosphothreonine. Lysine 121 is subject to N6-succinyllysine. Serine 132 bears the Phosphoserine mark. Glutamate 188 acts as the Proton acceptor in catalysis. Catalysis depends on lysine 230, which acts as the Schiff-base intermediate with dihydroxyacetone-P. Phosphoserine occurs at positions 272, 276, 299, and 301. 272 to 274 is a beta-D-fructose 1,6-bisphosphate binding site; that stretch reads SGG. Residue arginine 304 participates in beta-D-fructose 1,6-bisphosphate binding. A Phosphoserine modification is found at serine 309. Lysine 317 carries the N6-succinyllysine modification.

The protein belongs to the class I fructose-bisphosphate aldolase family. In terms of assembly, homotetramer. Interacts with BBS1, BBS2, BBS4 and BBS7. Forms a ternary complex with G6PD and TP53; this interaction is direct.

It localises to the cytoplasm. Its subcellular location is the cytosol. The protein localises to the cytoskeleton. It is found in the microtubule organizing center. The protein resides in the centrosome. It localises to the centriolar satellite. It carries out the reaction beta-D-fructose 1,6-bisphosphate = D-glyceraldehyde 3-phosphate + dihydroxyacetone phosphate. The catalysed reaction is beta-D-fructose 1-phosphate = D-glyceraldehyde + dihydroxyacetone phosphate. It participates in carbohydrate degradation; glycolysis; D-glyceraldehyde 3-phosphate and glycerone phosphate from D-glucose: step 4/4. The protein operates within carbohydrate biosynthesis; gluconeogenesis. Its pathway is carbohydrate metabolism; fructose metabolism. Its function is as follows. Catalyzes the aldol cleavage of fructose 1,6-biphosphate to form two triosephosphates dihydroxyacetone phosphate and D-glyceraldehyde 3-phosphate in glycolysis as well as the reverse stereospecific aldol addition reaction in gluconeogenesis. In fructolysis, metabolizes fructose 1-phosphate derived from the phosphorylation of dietary fructose by fructokinase into dihydroxyacetone phosphate and D-glyceraldehyde. Acts as an adapter independently of its enzymatic activity, exerts a tumor suppressor role by stabilizing the ternary complex with G6PD and TP53 to inhibit G6PD activity and keep oxidative pentose phosphate metabolism in check. This is Fructose-bisphosphate aldolase B (ALDOB) from Ovis aries (Sheep).